The chain runs to 379 residues: Succinyl-diaminopimelate desuccinylase (379 aa).

His-70 is a binding site for Zn(2+). Asp-72 is an active-site residue. Asp-103 contacts Zn(2+). Catalysis depends on Glu-137, which acts as the Proton acceptor. Zn(2+)-binding residues include Glu-138, Glu-166, and His-352.

This sequence belongs to the peptidase M20A family. DapE subfamily. Homodimer. Zn(2+) serves as cofactor. Requires Co(2+) as cofactor.

The catalysed reaction is N-succinyl-(2S,6S)-2,6-diaminopimelate + H2O = (2S,6S)-2,6-diaminopimelate + succinate. Its pathway is amino-acid biosynthesis; L-lysine biosynthesis via DAP pathway; LL-2,6-diaminopimelate from (S)-tetrahydrodipicolinate (succinylase route): step 3/3. In terms of biological role, catalyzes the hydrolysis of N-succinyl-L,L-diaminopimelic acid (SDAP), forming succinate and LL-2,6-diaminopimelate (DAP), an intermediate involved in the bacterial biosynthesis of lysine and meso-diaminopimelic acid, an essential component of bacterial cell walls. This Burkholderia multivorans (strain ATCC 17616 / 249) protein is Succinyl-diaminopimelate desuccinylase.